The primary structure comprises 353 residues: Iron(III) enterobactin esterase (353 aa).

It belongs to the Fes family.

The protein resides in the cytoplasm. It carries out the reaction Fe(III)-enterobactin + 3 H2O + H(+) = Fe(III)-[N-(2,3-dihydroxybenzoyl)-L-serine] + 2 N-(2,3-dihydroxybenzoyl)-L-serine. The enzyme catalyses Fe(III)-enterobactin + H2O = Fe(III)-[N-(2,3-dihydroxybenzoyl)-L-serine]3 + H(+). It catalyses the reaction Fe(III)-[N-(2,3-dihydroxybenzoyl)-L-serine]3 + H2O + H(+) = Fe(III)-[N-(2,3-dihydroxybenzoyl)-L-serine]2 + N-(2,3-dihydroxybenzoyl)-L-serine. The catalysed reaction is Fe(III)-[N-(2,3-dihydroxybenzoyl)-L-serine]2 + H2O + H(+) = Fe(III)-[N-(2,3-dihydroxybenzoyl)-L-serine] + N-(2,3-dihydroxybenzoyl)-L-serine. Catalyzes the hydrolysis of ferric enterobactin (Fe-Ent). Is responsible for the release of iron from ferric enterobactin. The polypeptide is Iron(III) enterobactin esterase (Yersinia enterocolitica).